Here is a 277-residue protein sequence, read N- to C-terminus: Ribosomal RNA small subunit methyltransferase A (277 aa).

S-adenosyl-L-methionine contacts are provided by N26, L28, G53, E74, D101, and N123.

This sequence belongs to the class I-like SAM-binding methyltransferase superfamily. rRNA adenine N(6)-methyltransferase family. RsmA subfamily.

The protein resides in the cytoplasm. The enzyme catalyses adenosine(1518)/adenosine(1519) in 16S rRNA + 4 S-adenosyl-L-methionine = N(6)-dimethyladenosine(1518)/N(6)-dimethyladenosine(1519) in 16S rRNA + 4 S-adenosyl-L-homocysteine + 4 H(+). In terms of biological role, specifically dimethylates two adjacent adenosines (A1518 and A1519) in the loop of a conserved hairpin near the 3'-end of 16S rRNA in the 30S particle. May play a critical role in biogenesis of 30S subunits. In Opitutus terrae (strain DSM 11246 / JCM 15787 / PB90-1), this protein is Ribosomal RNA small subunit methyltransferase A.